Here is a 154-residue protein sequence, read N- to C-terminus: Ribonuclease H (154 aa).

One can recognise an RNase H type-1 domain in the interval 1–142; that stretch reads MLKQVEIFTD…CDELARRAAG (142 aa). Mg(2+) contacts are provided by Asp-10, Glu-48, Asp-70, and Asp-134.

Belongs to the RNase H family. As to quaternary structure, monomer. Mg(2+) is required as a cofactor.

The protein resides in the cytoplasm. The catalysed reaction is Endonucleolytic cleavage to 5'-phosphomonoester.. Its function is as follows. Endonuclease that specifically degrades the RNA of RNA-DNA hybrids. This Edwardsiella ictaluri (strain 93-146) protein is Ribonuclease H.